We begin with the raw amino-acid sequence, 322 residues long: Tetraacyldisaccharide 4'-kinase (322 aa).

54-61 (SVGGTGKT) serves as a coordination point for ATP.

This sequence belongs to the LpxK family.

The enzyme catalyses a lipid A disaccharide + ATP = a lipid IVA + ADP + H(+). It participates in glycolipid biosynthesis; lipid IV(A) biosynthesis; lipid IV(A) from (3R)-3-hydroxytetradecanoyl-[acyl-carrier-protein] and UDP-N-acetyl-alpha-D-glucosamine: step 6/6. In terms of biological role, transfers the gamma-phosphate of ATP to the 4'-position of a tetraacyldisaccharide 1-phosphate intermediate (termed DS-1-P) to form tetraacyldisaccharide 1,4'-bis-phosphate (lipid IVA). The polypeptide is Tetraacyldisaccharide 4'-kinase (Francisella tularensis subsp. holarctica (strain FTNF002-00 / FTA)).